The chain runs to 358 residues: Na(+)/H(+) exchange regulatory cofactor NHE-RF1 (358 aa).

Ser-2 carries the N-acetylserine modification. Phosphoserine is present on residues Ser-2 and Ser-46. Residues 14 to 94 form the PDZ 1 domain; that stretch reads LCCLEKGPNG…AVRLLVVDPE (81 aa). Residues 114–132 are compositionally biased toward low complexity; the sequence is QEAPGQAEPPAAAEVQGAG. Positions 114 to 192 are disordered; sequence QEAPGQAEPP…DPDSPAEASG (79 aa). The segment covering 135-152 has biased composition (basic and acidic residues); sequence NEPREADKSHPEQRELRP. The 81-residue stretch at 154-234 folds into the PDZ 2 domain; it reads LCTMKKGPSG…ETKLLVVDRE (81 aa). Ser-162, Ser-269, Ser-280, Ser-290, and Ser-291 each carry phosphoserine. Positions 277 to 358 are disordered; it reads ALESPRPALV…SKKNELFSNL (82 aa). The segment covering 288 to 306 has biased composition (polar residues); it reads SASSDTSEELNSQDSPPKQ. At Thr-293 the chain carries Phosphothreonine. 3 positions are modified to phosphoserine: Ser-294, Ser-299, and Ser-302. The segment covering 307 to 319 has biased composition (low complexity); the sequence is DSTAPSSTSSSDP. Positions 348-358 are enriched in basic and acidic residues; the sequence is WSKKNELFSNL.

As to quaternary structure, homodimer, and heterodimer with NHERF2. Binds the N-termini of EZR, RDX and MSN. Binds the C-termini of PDGFRA, PDGFRB, ADRB2, NOS2 and CFTR. Binds ARHGAP17, EPI64, RACK1, OPRK1, GNAQ, CTNNB1 and PLCB3. Binds PDZK1. Interacts with CLCN3. Binds the C-terminus of PAG1. In resting T-cells, part of a PAG1-NHERF1-MSN complex which is disrupted upon TCR activation. Forms a complex with CFTR and SLC4A7. Forms a complex with SLC4A7 and ATP6V1B1. Interacts with TRPC4 (via the PDZ-binding domain). Directly interacts with HTR4. Interacts (via the PDZ 1 domain) with PODXL (via the C-terminal PDZ-binding motif DTHL); interaction is not detected in glomerular epithelium cells. Interacts (via the PDZ 1 domain) with PODXL (via the C-terminal PDZ-binding motif DTHL); the interaction take place early in the secretory pathway and is necessary for its apical membrane sorting. Interacts with SLC26A3. Interacts with MCC. Interacts with SLC34A1. Interacts (via the PDZ domains) with SLC26A6 isoform 4 and isoform 5. Interacts (via PDZ domains) with ACE2 (via PDZ-binding motif); the interaction may enhance ACE2 membrane residence. Post-translationally, phosphorylated on serine residues. In terms of tissue distribution, detected in liver, kidney, pancreas, prostate, spleen, small intestine and placenta, in particular in the syncytiotrophoblast.

It is found in the cytoplasm. It localises to the apical cell membrane. Its subcellular location is the endomembrane system. The protein resides in the cell projection. The protein localises to the filopodium. It is found in the ruffle. It localises to the microvillus. Scaffold protein that connects plasma membrane proteins with members of the ezrin/moesin/radixin family and thereby helps to link them to the actin cytoskeleton and to regulate their surface expression. Necessary for recycling of internalized ADRB2. Was first known to play a role in the regulation of the activity and subcellular location of SLC9A3. Necessary for cAMP-mediated phosphorylation and inhibition of SLC9A3. May enhance Wnt signaling. May participate in HTR4 targeting to microvilli. Involved in the regulation of phosphate reabsorption in the renal proximal tubules. Involved in sperm capacitation. May participate in the regulation of the chloride and bicarbonate homeostasis in spermatozoa. The sequence is that of Na(+)/H(+) exchange regulatory cofactor NHE-RF1 from Homo sapiens (Human).